The following is a 515-amino-acid chain: Bifunctional purine biosynthesis protein PurH (515 aa).

The region spanning 1 to 145 is the MGS-like domain; that stretch reads MTKRALISVS…KNHASVTVVV (145 aa).

It belongs to the PurH family.

The catalysed reaction is (6R)-10-formyltetrahydrofolate + 5-amino-1-(5-phospho-beta-D-ribosyl)imidazole-4-carboxamide = 5-formamido-1-(5-phospho-D-ribosyl)imidazole-4-carboxamide + (6S)-5,6,7,8-tetrahydrofolate. It carries out the reaction IMP + H2O = 5-formamido-1-(5-phospho-D-ribosyl)imidazole-4-carboxamide. The protein operates within purine metabolism; IMP biosynthesis via de novo pathway; 5-formamido-1-(5-phospho-D-ribosyl)imidazole-4-carboxamide from 5-amino-1-(5-phospho-D-ribosyl)imidazole-4-carboxamide (10-formyl THF route): step 1/1. It functions in the pathway purine metabolism; IMP biosynthesis via de novo pathway; IMP from 5-formamido-1-(5-phospho-D-ribosyl)imidazole-4-carboxamide: step 1/1. This chain is Bifunctional purine biosynthesis protein PurH, found in Streptococcus equi subsp. equi (strain 4047).